A 189-amino-acid polypeptide reads, in one-letter code: Crossover junction endodeoxyribonuclease RuvC (189 aa).

Residues aspartate 7, glutamate 68, and aspartate 141 contribute to the active site. Residues aspartate 7, glutamate 68, and aspartate 141 each contribute to the Mg(2+) site.

It belongs to the RuvC family. As to quaternary structure, homodimer which binds Holliday junction (HJ) DNA. The HJ becomes 2-fold symmetrical on binding to RuvC with unstacked arms; it has a different conformation from HJ DNA in complex with RuvA. In the full resolvosome a probable DNA-RuvA(4)-RuvB(12)-RuvC(2) complex forms which resolves the HJ. It depends on Mg(2+) as a cofactor.

Its subcellular location is the cytoplasm. It carries out the reaction Endonucleolytic cleavage at a junction such as a reciprocal single-stranded crossover between two homologous DNA duplexes (Holliday junction).. The RuvA-RuvB-RuvC complex processes Holliday junction (HJ) DNA during genetic recombination and DNA repair. Endonuclease that resolves HJ intermediates. Cleaves cruciform DNA by making single-stranded nicks across the HJ at symmetrical positions within the homologous arms, yielding a 5'-phosphate and a 3'-hydroxyl group; requires a central core of homology in the junction. The consensus cleavage sequence is 5'-(A/T)TT(C/G)-3'. Cleavage occurs on the 3'-side of the TT dinucleotide at the point of strand exchange. HJ branch migration catalyzed by RuvA-RuvB allows RuvC to scan DNA until it finds its consensus sequence, where it cleaves and resolves the cruciform DNA. The protein is Crossover junction endodeoxyribonuclease RuvC of Rhodococcus opacus (strain B4).